The primary structure comprises 158 residues: Small ribosomal subunit protein uS7 (158 aa).

Belongs to the universal ribosomal protein uS7 family. As to quaternary structure, part of the 30S ribosomal subunit. Contacts proteins S9 and S11.

One of the primary rRNA binding proteins, it binds directly to 16S rRNA where it nucleates assembly of the head domain of the 30S subunit. Is located at the subunit interface close to the decoding center, probably blocks exit of the E-site tRNA. This is Small ribosomal subunit protein uS7 from Flavobacterium psychrophilum (strain ATCC 49511 / DSM 21280 / CIP 103535 / JIP02/86).